The primary structure comprises 230 residues: Ureidoacrylate amidohydrolase RutB (230 aa).

The Proton acceptor role is filled by D24. The active site involves K133. Catalysis depends on C166, which acts as the Nucleophile.

The protein belongs to the isochorismatase family. RutB subfamily.

It catalyses the reaction (Z)-3-ureidoacrylate + H2O + H(+) = (Z)-3-aminoacrylate + NH4(+) + CO2. It carries out the reaction (Z)-3-ureidoacrylate + H2O = (Z)-3-aminoacrylate + carbamate + H(+). The catalysed reaction is (Z)-2-methylureidoacrylate + H2O + H(+) = (Z)-2-methylaminoacrylate + NH4(+) + CO2. Hydrolyzes ureidoacrylate to form aminoacrylate and carbamate. The carbamate hydrolyzes spontaneously, thereby releasing one of the nitrogen atoms of the pyrimidine ring as ammonia and one of its carbon atoms as CO2. The polypeptide is Ureidoacrylate amidohydrolase RutB (Enterobacter sp. (strain 638)).